Here is a 355-residue protein sequence, read N- to C-terminus: F-box only protein 32 (355 aa).

The Nuclear localization signal motif lies at 62–67 (KKRKKD). Positions 169 to 173 (LLQTL) match the Nuclear export signal motif. Residues 223 to 271 (LTITDLPVCLQLNIMQRLSDGRDLVSLGQAAPDLHVLSEDRLLWKRLCQ) enclose the F-box domain. A Bipartite nuclear localization signal motif is present at residues 280–295 (RKRLILSDKGQLDWKK).

In terms of assembly, part of the SCF (SKP1-CUL1-F-box) E3 ubiquitin-protein ligase complex SCF(FBXO32) formed of CUL1, SKP1, RBX1 and FBXO32. As to expression, specifically expressed in cardiac and skeletal muscle.

It is found in the cytoplasm. Its subcellular location is the nucleus. It participates in protein modification; protein ubiquitination. Functionally, substrate recognition component of a SCF (SKP1-CUL1-F-box protein) E3 ubiquitin-protein ligase complex which mediates the ubiquitination and subsequent proteasomal degradation of target proteins. Probably recognizes and binds to phosphorylated target proteins during skeletal muscle atrophy. Recognizes TERF1. The chain is F-box only protein 32 (Fbxo32) from Mus musculus (Mouse).